We begin with the raw amino-acid sequence, 264 residues long: Low molecular mass lipoprotein PBMHP-12 (264 aa).

The signal sequence occupies residues 1-16 (MKLLVVFAMCVPAASA).

This sequence belongs to the 30 kDa lipoprotein family.

It localises to the secreted. The polypeptide is Low molecular mass lipoprotein PBMHP-12 (Bombyx mori (Silk moth)).